Reading from the N-terminus, the 152-residue chain is MGLSTLEQKLTAMISAPVEALGFELVGLEFIRARVSTLRIYIDSENGITVDDCADVSHQVSAVLDVEDPISVLYNLEISSPGLERPLFTTEHYQRFIGEEVSLVLRIAMQNRRKWLGIIKTVDGEMITVTVDGKDEVFALSNIQKANLVPHF.

This sequence belongs to the RimP family.

Its subcellular location is the cytoplasm. In terms of biological role, required for maturation of 30S ribosomal subunits. The protein is Ribosome maturation factor RimP of Photorhabdus laumondii subsp. laumondii (strain DSM 15139 / CIP 105565 / TT01) (Photorhabdus luminescens subsp. laumondii).